We begin with the raw amino-acid sequence, 305 residues long: Glyceraldehyde-3-phosphate dehydrogenase 2, cytosolic (305 aa).

2 residues coordinate NAD(+): D3 and R50. Residues 121-123 (SCT), T152, 181-182 (TG), and R204 contribute to the D-glyceraldehyde 3-phosphate site. C122 acts as the Nucleophile in catalysis. An NAD(+)-binding site is contributed by N286.

It belongs to the glyceraldehyde-3-phosphate dehydrogenase family. Homotetramer.

The protein localises to the cytoplasm. It carries out the reaction D-glyceraldehyde 3-phosphate + phosphate + NAD(+) = (2R)-3-phospho-glyceroyl phosphate + NADH + H(+). It functions in the pathway carbohydrate degradation; glycolysis; pyruvate from D-glyceraldehyde 3-phosphate: step 1/5. Key enzyme in glycolysis that catalyzes the first step of the pathway by converting D-glyceraldehyde 3-phosphate (G3P) into 3-phospho-D-glyceroyl phosphate. Essential for the maintenance of cellular ATP levels and carbohydrate metabolism. The chain is Glyceraldehyde-3-phosphate dehydrogenase 2, cytosolic (GAPC) from Hordeum vulgare (Barley).